The chain runs to 533 residues: Berberine bridge enzyme-like 28 (533 aa).

An N-terminal signal peptide occupies residues 1–23 (MEFSSFLFTILLFSLNISPLVSA). A disulfide bridge links cysteine 34 with cysteine 96. Residues 74–249 (ETPKPVSIIT…LSWKVKLVDV (176 aa)) form the FAD-binding PCMH-type domain. The residue at position 111 (histidine 111) is a Pros-8alpha-FAD histidine. Residues asparagine 142 and asparagine 440 are each glycosylated (N-linked (GlcNAc...) asparagine).

Belongs to the oxygen-dependent FAD-linked oxidoreductase family. FAD serves as cofactor.

It localises to the secreted. The protein localises to the cell wall. Its function is as follows. Involved in adaptation to salt stress. This is Berberine bridge enzyme-like 28 from Arabidopsis thaliana (Mouse-ear cress).